Consider the following 465-residue polypeptide: GTPase Der (465 aa).

EngA-type G domains lie at 3–167 and 179–352; these read PLVA…PERS and IHIA…VSAL. GTP contacts are provided by residues 9 to 16, 57 to 61, 119 to 122, 185 to 192, 232 to 236, and 297 to 300; these read GRPNVGKS, DTGGM, NKID, DTAGL, and NKWD. Residues 353–437 enclose the KH-like domain; it reads RQFSTSEVNK…PVRFLFREGD (85 aa).

It belongs to the TRAFAC class TrmE-Era-EngA-EngB-Septin-like GTPase superfamily. EngA (Der) GTPase family. As to quaternary structure, associates with the 50S ribosomal subunit.

GTPase that plays an essential role in the late steps of ribosome biogenesis. This is GTPase Der from Xylella fastidiosa (strain M23).